Here is a 190-residue protein sequence, read N- to C-terminus: MIIVIMGVSGSGKTVVGSQLAKKLGWNFYDADDYHPLENKEKMSQGTPLNDQDRHPWLCELHEIMMREKALGQHVVLACSALKRAYRSTLLTGSTPHWPENYQENDDLSSDTLFVHLHGSLEILSRRLLERKGHFMPRTLLDSQIDTLEPPSAPERFIAIDVDKDISVIVSEIEGEVDRKMMLVKSAQKD.

Residue 7–14 (GVSGSGKT) coordinates ATP.

Belongs to the gluconokinase GntK/GntV family.

It catalyses the reaction D-gluconate + ATP = 6-phospho-D-gluconate + ADP + H(+). Its pathway is carbohydrate acid metabolism; D-gluconate degradation. The polypeptide is Probable gluconokinase (idnk) (Xenopus tropicalis (Western clawed frog)).